Here is a 58-residue protein sequence, read N- to C-terminus: Small ribosomal subunit protein bS21C (58 aa).

The segment at 38–58 is disordered; it reads YEKPSLRRKRKAEAARKGGRY. The span at 49-58 shows a compositional bias: basic and acidic residues; sequence AEAARKGGRY.

This sequence belongs to the bacterial ribosomal protein bS21 family.

The polypeptide is Small ribosomal subunit protein bS21C (rpsU3) (Nostoc sp. (strain PCC 7120 / SAG 25.82 / UTEX 2576)).